Reading from the N-terminus, the 114-residue chain is Fumarate reductase subunit D (114 aa).

Transmembrane regions (helical) follow at residues 24–44 (VSAI…PFGL), 50–70 (LITF…TIFP), and 92–112 (GGFI…FAVI).

It belongs to the FrdD family. In terms of assembly, part of an enzyme complex containing four subunits: a flavoprotein (FrdA), an iron-sulfur protein (FrdB), and two hydrophobic anchor proteins (FrdC and FrdD).

The protein localises to the cell inner membrane. Anchors the catalytic components of the fumarate reductase complex to the cell membrane, binds quinones. The protein is Fumarate reductase subunit D of Haemophilus influenzae (strain 86-028NP).